We begin with the raw amino-acid sequence, 317 residues long: Aspartate carbamoyltransferase catalytic subunit (317 aa).

Residues R64 and T65 each contribute to the carbamoyl phosphate site. K92 is an L-aspartate binding site. R114, H142, and Q145 together coordinate carbamoyl phosphate. 2 residues coordinate L-aspartate: R176 and R230. The carbamoyl phosphate site is built by G271 and P272.

Belongs to the aspartate/ornithine carbamoyltransferase superfamily. ATCase family. As to quaternary structure, heterododecamer (2C3:3R2) of six catalytic PyrB chains organized as two trimers (C3), and six regulatory PyrI chains organized as three dimers (R2).

It catalyses the reaction carbamoyl phosphate + L-aspartate = N-carbamoyl-L-aspartate + phosphate + H(+). Its pathway is pyrimidine metabolism; UMP biosynthesis via de novo pathway; (S)-dihydroorotate from bicarbonate: step 2/3. Its function is as follows. Catalyzes the condensation of carbamoyl phosphate and aspartate to form carbamoyl aspartate and inorganic phosphate, the committed step in the de novo pyrimidine nucleotide biosynthesis pathway. The polypeptide is Aspartate carbamoyltransferase catalytic subunit (Nitratidesulfovibrio vulgaris (strain ATCC 29579 / DSM 644 / CCUG 34227 / NCIMB 8303 / VKM B-1760 / Hildenborough) (Desulfovibrio vulgaris)).